We begin with the raw amino-acid sequence, 239 residues long: Pyridoxine 5'-phosphate synthase (239 aa).

Position 7 (asparagine 7) interacts with 3-amino-2-oxopropyl phosphate. Residue 9-10 participates in 1-deoxy-D-xylulose 5-phosphate binding; sequence DH. Residue arginine 18 coordinates 3-amino-2-oxopropyl phosphate. Histidine 43 serves as the catalytic Proton acceptor. 1-deoxy-D-xylulose 5-phosphate contacts are provided by arginine 45 and histidine 50. Glutamate 70 (proton acceptor) is an active-site residue. Position 100 (threonine 100) interacts with 1-deoxy-D-xylulose 5-phosphate. The active-site Proton donor is histidine 191. 3-amino-2-oxopropyl phosphate contacts are provided by residues glycine 192 and 213–214; that span reads GH.

The protein belongs to the PNP synthase family. As to quaternary structure, homooctamer; tetramer of dimers.

Its subcellular location is the cytoplasm. It carries out the reaction 3-amino-2-oxopropyl phosphate + 1-deoxy-D-xylulose 5-phosphate = pyridoxine 5'-phosphate + phosphate + 2 H2O + H(+). Its pathway is cofactor biosynthesis; pyridoxine 5'-phosphate biosynthesis; pyridoxine 5'-phosphate from D-erythrose 4-phosphate: step 5/5. Functionally, catalyzes the complicated ring closure reaction between the two acyclic compounds 1-deoxy-D-xylulose-5-phosphate (DXP) and 3-amino-2-oxopropyl phosphate (1-amino-acetone-3-phosphate or AAP) to form pyridoxine 5'-phosphate (PNP) and inorganic phosphate. This is Pyridoxine 5'-phosphate synthase from Synechococcus sp. (strain JA-2-3B'a(2-13)) (Cyanobacteria bacterium Yellowstone B-Prime).